Reading from the N-terminus, the 388-residue chain is MTDTSFIESEERQALRKAVASWVANYGHEYYLDKARKHEHTSELWAEAGKLGFLGVNLPEEYGGGGAGMYELSLVMEEMAAAGSALLLMVVSPAINGTIIAKFGTDDQKKRWLPGIADGSLTMAFAITEPDAGSNSHKITTTARRDGSDWIIKGQKVFISGIDQAQAVLVVGRSEEAKTGKLRPALFVVPTDAPGFSYTPIEMELVSPERQFQVFLDDVRLPADALVGAEDAAIAQLFAGLNPERIMGAASAVGMGRFALGRAVDYVKTRKVWSTPIGAHQGLAHPLAQCHIEVELAKLMTQKAATLYDHGDDFGAAEAANMAKYAAAEASSRAVDQAVQSMGGNGLTKEYGVAAMMTSARLARIAPISREMVLNFVAQTSLGLPRSY.

It belongs to the acyl-CoA dehydrogenase family. FAD serves as cofactor.

It carries out the reaction a 2,3-saturated acyl-CoA + A = a 2,3-dehydroacyl-CoA + AH2. The chain is Acyl-CoA dehydrogenase fadE12 (fadE12) from Mycobacterium tuberculosis (strain CDC 1551 / Oshkosh).